Reading from the N-terminus, the 1141-residue chain is Eukaryotic translation initiation factor 3 subunit A (1141 aa).

The region spanning 319-501 (LQRMAAHVLL…NSIYFGTDLT (183 aa)) is the PCI domain. Composition is skewed to basic and acidic residues over residues 588 to 623 (QNNAREEEEARRQEEESRKAKLAEQKRLEQEQEERE) and 829 to 899 (AAEE…RGGD). Disordered stretches follow at residues 588–631 (QNNA…QNEI) and 829–1141 (AAEE…VKRR). Ser908 is subject to Phosphoserine. Composition is skewed to basic and acidic residues over residues 920–976 (ERND…EPDT), 990–1051 (SRDD…EPQR), 1059–1087 (DAPRHADRENRRPAGERRDRDVRETRGDQ), and 1110–1131 (TREEKPAAKRDQAQEKENKAGD).

The protein belongs to the eIF-3 subunit A family. Component of the eukaryotic translation initiation factor 3 (eIF-3) complex. The eIF-3 complex interacts with pix.

Its subcellular location is the cytoplasm. RNA-binding component of the eukaryotic translation initiation factor 3 (eIF-3) complex, which is involved in protein synthesis of a specialized repertoire of mRNAs and, together with other initiation factors, stimulates binding of mRNA and methionyl-tRNAi to the 40S ribosome. The eIF-3 complex specifically targets and initiates translation of a subset of mRNAs involved in cell proliferation. The protein is Eukaryotic translation initiation factor 3 subunit A of Drosophila simulans (Fruit fly).